A 150-amino-acid polypeptide reads, in one-letter code: Phosphopantetheine adenylyltransferase (150 aa).

Thr-15 is a substrate binding site. ATP is bound by residues 15 to 16 and His-23; that span reads TF. The substrate site is built by Ile-80 and Arg-94. Residues 95–97, Glu-105, and 130–136 contribute to the ATP site; these read GIR and LENISSR.

The protein belongs to the bacterial CoaD family. In terms of assembly, homohexamer. Mg(2+) serves as cofactor.

The protein localises to the cytoplasm. It catalyses the reaction (R)-4'-phosphopantetheine + ATP + H(+) = 3'-dephospho-CoA + diphosphate. It functions in the pathway cofactor biosynthesis; coenzyme A biosynthesis; CoA from (R)-pantothenate: step 4/5. In terms of biological role, reversibly transfers an adenylyl group from ATP to 4'-phosphopantetheine, yielding dephospho-CoA (dPCoA) and pyrophosphate. This chain is Phosphopantetheine adenylyltransferase, found in Malacoplasma penetrans (strain HF-2) (Mycoplasma penetrans).